Consider the following 250-residue polypeptide: Large ribosomal subunit protein uL29m (250 aa).

At Lys-144 the chain carries N6-acetyllysine.

It belongs to the universal ribosomal protein uL29 family. Component of the mitochondrial large ribosomal subunit (mt-LSU). Mature mammalian 55S mitochondrial ribosomes consist of a small (28S) and a large (39S) subunit. The 28S small subunit contains a 12S ribosomal RNA (12S mt-rRNA) and 30 different proteins. The 39S large subunit contains a 16S rRNA (16S mt-rRNA), a copy of mitochondrial valine transfer RNA (mt-tRNA(Val)), which plays an integral structural role, and 52 different proteins.

The protein resides in the mitochondrion. The polypeptide is Large ribosomal subunit protein uL29m (MRPL47) (Homo sapiens (Human)).